The primary structure comprises 729 residues: 1,4-alpha-glucan branching enzyme GlgB 2 (729 aa).

The active-site Nucleophile is the Asp408. Glu461 serves as the catalytic Proton donor.

The protein belongs to the glycosyl hydrolase 13 family. GlgB subfamily. As to quaternary structure, monomer.

The catalysed reaction is Transfers a segment of a (1-&gt;4)-alpha-D-glucan chain to a primary hydroxy group in a similar glucan chain.. It functions in the pathway glycan biosynthesis; glycogen biosynthesis. In terms of biological role, catalyzes the formation of the alpha-1,6-glucosidic linkages in glycogen by scission of a 1,4-alpha-linked oligosaccharide from growing alpha-1,4-glucan chains and the subsequent attachment of the oligosaccharide to the alpha-1,6 position. In Xanthomonas campestris pv. campestris (strain 8004), this protein is 1,4-alpha-glucan branching enzyme GlgB 2.